A 286-amino-acid chain; its full sequence is Nucleotide-binding protein PLES_48441 (286 aa).

Position 8-15 (8-15 (GRSGSGKS)) interacts with ATP. GTP is bound at residue 60 to 63 (DARN).

Belongs to the RapZ-like family.

In terms of biological role, displays ATPase and GTPase activities. The sequence is that of Nucleotide-binding protein PLES_48441 from Pseudomonas aeruginosa (strain LESB58).